We begin with the raw amino-acid sequence, 470 residues long: MSTNEGSLWGGRFAGGPSDALAALSKSTHFDWVLAPYDLTASRAHTMVLFRAGLLTEEQRDGLLAGLDSLAQDVADGSFGPLVTDEDVHSALERGLIDRVGPDLGGRLRAGRSRNDQVAALFRMWLRDAVRRVATGVLDVVGALAEQAAAHPSAIMPGKTHLQSAQPILLAHHLLAHAHPLLRDLDRIVDFDKRAAVSPYGSGALAGSSLGLDPDAIAADLGFSAAADNSVDATAARDFAAEAAFVFAMIAVDLSRLAEDIIVWSSTEFGYVTLHDSWSTGSSIMPQKKNPDIAELARGKSGRLIGNLAGLLATLKAQPLAYNRDLQEDKEPVFDSVAQLELLLPAMAGLVASLTFNVQRMAELAPAGYTLATDLAEWLVRQGVPFRSAHEAAGAAVRAAEQRGVGLQELTDDELAAISPELTPQVREVLTIEGSVSARDCRGGTAPGRVAEQLNAIGEAAERLRRQLVR.

This sequence belongs to the lyase 1 family. Argininosuccinate lyase subfamily.

Its subcellular location is the cytoplasm. The enzyme catalyses 2-(N(omega)-L-arginino)succinate = fumarate + L-arginine. It participates in amino-acid biosynthesis; L-arginine biosynthesis; L-arginine from L-ornithine and carbamoyl phosphate: step 3/3. The protein is Argininosuccinate lyase of Mycobacterium tuberculosis (strain CDC 1551 / Oshkosh).